A 189-amino-acid chain; its full sequence is SAGA-associated factor 11 homolog (189 aa).

Residues 94–115 form an SGF11-type zinc finger; it reads CTCPNCDRLVAATRFAPHLEKC. Residues 128–189 are disordered; sequence RRLATKEGSS…GSKKNNGKTF (62 aa). Residues 136 to 145 are compositionally biased toward low complexity; it reads SSASSTSTST. The residue at position 165 (serine 165) is a Phosphoserine. Positions 175–189 are enriched in low complexity; that stretch reads NSRNNGSKKNNGKTF.

This sequence belongs to the SGF11 family. As to quaternary structure, component of some SAGA transcription coactivator-HAT complexes, at least composed of Ada2b, not/nonstop, Pcaf/Gcn5, Sgf11 and Spt3. Within the SAGA complex, Sgf11, e(y)2, and not/nonstop form an additional subcomplex of SAGA called the DUB module (deubiquitination module). Interacts directly with not/nonstop. Interacts with the AMEX complex component xmas-2. Interacts with Cbp80; important for promoter recruitment of Sgf11 that is not associated with the DUB module.

It is found in the nucleus. The protein resides in the nucleoplasm. The protein localises to the cytoplasm. Functionally, component of the transcription regulatory histone acetylation (HAT) complex SAGA, a multiprotein complex that activates transcription by remodeling chromatin and mediating histone acetylation and deubiquitination. Within the SAGA complex, participates in a subcomplex that specifically deubiquitinates histone H2B. The SAGA complex is recruited to specific gene promoters by activators, where it is required for transcription. Required for nuclear receptor-mediated transactivation. Binds independently on SAGA to promoters in an RNA-dependent manner. Binds to mRNA and is essential for total mRNA export from the nucleus. Required to counteract heterochromatin silencing. Controls the development of neuronal connectivity in visual system by being required for accurate axon targeting in the optic lobe. Required for expression of ecdysone-induced genes such as br/broad. The polypeptide is SAGA-associated factor 11 homolog (Drosophila virilis (Fruit fly)).